We begin with the raw amino-acid sequence, 250 residues long: Small ribosomal subunit protein uS3 (250 aa).

Residues 39 to 111 form the KH type-2 domain; it reads IRTLIKNNYP…KVQINIFEVK (73 aa).

This sequence belongs to the universal ribosomal protein uS3 family. As to quaternary structure, part of the 30S ribosomal subunit. Forms a tight complex with proteins S10 and S14.

In terms of biological role, binds the lower part of the 30S subunit head. Binds mRNA in the 70S ribosome, positioning it for translation. The chain is Small ribosomal subunit protein uS3 from Alder yellows phytoplasma.